The following is a 523-amino-acid chain: Calcium-dependent protein kinase 28 (523 aa).

Residue glycine 2 is the site of N-myristoyl glycine attachment. The S-palmitoyl cysteine moiety is linked to residue cysteine 4. Residues 15 to 43 form a disordered region; the sequence is SSRRSSQTKSKAAPTPIDTKASTKRRTGS. In terms of domain architecture, Protein kinase spans 62–322; sequence YTIGKLLGHG…AAQALSHAWV (261 aa). Residues 68 to 76 and lysine 91 contribute to the ATP site; that span reads LGHGQFGYT. Aspartate 188 functions as the Proton acceptor in the catalytic mechanism. Phosphoserine is present on residues serine 228 and serine 318. Positions 328–358 are autoinhibitory domain; sequence ATDIPVDISVLNNLRQFVRYSRLKQFALRAL. EF-hand domains follow at residues 365-400, 402-437, 444-479, and 482-509; these read AEIS…DLPW, LKDS…VHQL, KWQL…RGSI, and LLDE…ASIS. Aspartate 378, aspartate 380, asparagine 382, glutamate 389, aspartate 415, asparagine 417, aspartate 419, glutamate 426, aspartate 457, aspartate 459, aspartate 461, tyrosine 463, glutamate 468, aspartate 487, aspartate 489, aspartate 491, and lysine 493 together coordinate Ca(2+). Serine 495 is modified (phosphoserine). Ca(2+) is bound at residue glutamate 498. Residue serine 515 is modified to Phosphoserine.

The protein belongs to the protein kinase superfamily. Ser/Thr protein kinase family. CDPK subfamily. In terms of assembly, interacts with BIK1. In terms of tissue distribution, expressed in vascular and meristematic tissues throughout plant development.

Its subcellular location is the cell membrane. It catalyses the reaction L-seryl-[protein] + ATP = O-phospho-L-seryl-[protein] + ADP + H(+). The catalysed reaction is L-threonyl-[protein] + ATP = O-phospho-L-threonyl-[protein] + ADP + H(+). With respect to regulation, activated by calcium. Autophosphorylation plays an important role in the regulation of the kinase activity. Functionally, may play a role in signal transduction pathways that involve calcium as a second messenger. Acts as a developmentally controlled regulator for coordinated stem elongation and vascular development. Acts as a key component which contributes to the developmental switch that establishes the transition from vegetative to reproductive growth. Involved in pathogen-associated molecular pattern (PAMP)-triggered immunity (PTI) signaling. Interacts with and phosphorylates the kinase BIK1, a central rate-limiting kinase in PTI signaling. Facilitates BIK1 turnover and negatively regulates BIK1-mediated immune responses triggered by several PAMPs. Its kinase activity is necessary and sufficient for its function in PTI signaling. This Arabidopsis thaliana (Mouse-ear cress) protein is Calcium-dependent protein kinase 28.